Here is a 32-residue protein sequence, read N- to C-terminus: Peptide tarsal-less AA (32 aa).

The tract at residues 1-32 is disordered; the sequence is MLDPTGTYRRPRDTQDSRQKRRQDCLDPTGQY. The stretch at 2-8 is repeat 1; it reads LDPTGTY. The 2 X 7 AA repeats of L-D-P-T-G-[TQ]-Y stretch occupies residues 2–32; the sequence is LDPTGTYRRPRDTQDSRQKRRQDCLDPTGQY. Positions 10-25 are enriched in basic and acidic residues; that stretch reads RPRDTQDSRQKRRQDC. Repeat 2 spans residues 26–32; the sequence is LDPTGQY.

It localises to the cytoplasm. The protein localises to the nucleus. Functionally, one of four peptides (tal-1A, tal-2A, tal-3A and tal-AA) produced from a polycistronic gene that function redundantly in several developmental processes. Required in early stages of leg development for the intercalation of the tarsal segments during the mid-third instar stage and later for tarsal joint formation. Promotes the post-translational modification of ovo isoform B (svb) into its active form which in turn initiates trichome development and promotes tarsal joint development. This is likely due to recruitment of the E3 ubiquitin-protein ligase Ubr3 to svb for ubiquitination of its N-terminus, converting svb into a transcriptional activator. Also enhances interaction of Ubr3 with Diap1. Required for correct wing and leg formation through its regulation of several genes including those in the Notch signaling pathway. Essential for denticle formation and may have a role in the developmental timing of trichome differentiation. Essential for the development of taenidial folds in the trachea. The sequence is that of Peptide tarsal-less AA from Drosophila melanogaster (Fruit fly).